Consider the following 136-residue polypeptide: Protein PsiE homolog (136 aa).

A run of 4 helical transmembrane segments spans residues 15–35, 55–75, 82–102, and 108–128; these read ILQT…VVFL, YELV…ALIV, FHFP…RLII, and PLDV…LWLC.

The protein belongs to the PsiE family.

Its subcellular location is the cell inner membrane. The sequence is that of Protein PsiE homolog from Enterobacter sp. (strain 638).